The chain runs to 164 residues: Crossover junction endodeoxyribonuclease RuvC (164 aa).

Catalysis depends on residues aspartate 7, glutamate 67, and aspartate 140. Mg(2+) is bound by residues aspartate 7, glutamate 67, and aspartate 140.

This sequence belongs to the RuvC family. Homodimer which binds Holliday junction (HJ) DNA. The HJ becomes 2-fold symmetrical on binding to RuvC with unstacked arms; it has a different conformation from HJ DNA in complex with RuvA. In the full resolvosome a probable DNA-RuvA(4)-RuvB(12)-RuvC(2) complex forms which resolves the HJ. The cofactor is Mg(2+).

Its subcellular location is the cytoplasm. It catalyses the reaction Endonucleolytic cleavage at a junction such as a reciprocal single-stranded crossover between two homologous DNA duplexes (Holliday junction).. Its function is as follows. The RuvA-RuvB-RuvC complex processes Holliday junction (HJ) DNA during genetic recombination and DNA repair. Endonuclease that resolves HJ intermediates. Cleaves cruciform DNA by making single-stranded nicks across the HJ at symmetrical positions within the homologous arms, yielding a 5'-phosphate and a 3'-hydroxyl group; requires a central core of homology in the junction. The consensus cleavage sequence is 5'-(A/T)TT(C/G)-3'. Cleavage occurs on the 3'-side of the TT dinucleotide at the point of strand exchange. HJ branch migration catalyzed by RuvA-RuvB allows RuvC to scan DNA until it finds its consensus sequence, where it cleaves and resolves the cruciform DNA. The sequence is that of Crossover junction endodeoxyribonuclease RuvC from Alkaliphilus metalliredigens (strain QYMF).